We begin with the raw amino-acid sequence, 681 residues long: MFERNQKTIFVLDHTRYFSISSEQYISMDYLKGKPVQETPASGSSSMVVGTQLSKSLWTCAVESSIEYCRIVWDLFPGKKHVRFIVSDTAAHIVNTWSPSTQNMSHVSNAMMMVSVPSRSIPQSSDYSVIHGLRAAIEALAEPTDEQLLATQVGCKQIPNKGRVICITSARDNTSMKSLEDIFNTVLLQQNALVAPPSKKGLQIDHCHLVILNIVPLGVESLVTNRNLLEISPLLDVEIHTVNAPDISDKLLHLIMGHYDLASTTVTNIPMKEEQNANSSANYDVEILHERAAHTRVCGPDFTLTTSIKPGTTYETVTLKWCTPRGCGSSDLQPCVGQYNVTPVDVTSRPSSCLINFLLNGRSVLLEVPRKTGTKTTSHMLSARGGEIFVHSLSIARSAMDEAPSISDGPGGRVSDYRIPELGQLFKMSRMVPLKTKPKGKCSQGEHLWRRLPRYFPRTTNVTILFNLQRQLNWLPHFLHLIVKEDMDKQDEVRCQQQIHELYKSASRGDMLPFNTTNNARPKVGKTKDQYRLFYRELEQLIQLNAQTPHHKNLLESLQSLRAAYGDVSSKLDPGASHLRSYTESPLSPERLEPTSSASNSSSSILKASKRRMSSSGQRSLLDMISIAERSQSNKRLDFSGRLCTPLGQTAKLYPDFGNKEKDILTPGVVTSNLKDESIRS.

A disordered region spans residues 574 to 619; the sequence is PGASHLRSYTESPLSPERLEPTSSASNSSSSILKASKRRMSSSGQR. Positions 606-612 match the Nuclear localization signal (NLS) motif; it reads LKASKRR.

This sequence belongs to the Integrator subunit 13 family. Belongs to the multiprotein complex Integrator, at least composed of IntS1, IntS2, IntS3, IntS4, omd/IntS5, IntS6, defl/IntS7, IntS8, IntS9, IntS10, IntS11, IntS12, asun/IntS13, IntS14 and IntS15. The core complex associates with protein phosphatase 2A subunits mts/PP2A and Pp2A-29B, to form the Integrator-PP2A (INTAC) complex. Post-translationally, phosphorylated.

It localises to the nucleus. It is found in the cytoplasm. The protein resides in the perinuclear region. In terms of biological role, component of the integrator complex, a multiprotein complex that terminates RNA polymerase II (Pol II) transcription in the promoter-proximal region of genes. The integrator complex provides a quality checkpoint during transcription elongation by driving premature transcription termination of transcripts that are unfavorably configured for transcriptional elongation: the complex terminates transcription by (1) catalyzing dephosphorylation of the C-terminal domain (CTD) of Pol II subunit Polr2A/Rbp1 and Spt5, and (2) degrading the exiting nascent RNA transcript via endonuclease activity. The integrator complex is also involved in the 3'-end processing of the U7 snRNA, and also the spliceosomal snRNAs U1, U2, U4 and U5. This Drosophila virilis (Fruit fly) protein is Protein asunder (asun).